The chain runs to 548 residues: Chaperonin GroEL (548 aa).

ATP contacts are provided by residues 30–33, Lys-51, 87–91, Gly-415, 479–481, and Asp-495; these read TLGP, DGTTT, and NAA.

This sequence belongs to the chaperonin (HSP60) family. As to quaternary structure, forms a cylinder of 14 subunits composed of two heptameric rings stacked back-to-back. Interacts with the co-chaperonin GroES.

Its subcellular location is the cytoplasm. It carries out the reaction ATP + H2O + a folded polypeptide = ADP + phosphate + an unfolded polypeptide.. Functionally, together with its co-chaperonin GroES, plays an essential role in assisting protein folding. The GroEL-GroES system forms a nano-cage that allows encapsulation of the non-native substrate proteins and provides a physical environment optimized to promote and accelerate protein folding. The sequence is that of Chaperonin GroEL from Serratia proteamaculans (strain 568).